An 87-amino-acid chain; its full sequence is Large ribosomal subunit protein eL31 (87 aa).

It belongs to the eukaryotic ribosomal protein eL31 family.

This Methanocaldococcus jannaschii (strain ATCC 43067 / DSM 2661 / JAL-1 / JCM 10045 / NBRC 100440) (Methanococcus jannaschii) protein is Large ribosomal subunit protein eL31 (rpl31e).